Here is a 27-residue protein sequence, read N- to C-terminus: M-ectatotoxin-Eb2a (27 aa).

As to expression, expressed by the venom gland.

It is found in the secreted. In terms of biological role, antimicrobial peptide forming an alpha-helix in watery and membraneous environments, enabling it to perforate membranes. Active against Gram-negative bacteria E.coli DH5alpha (MIC=5 uM), E.coli MH1 (MIC=0.6 uM) and P.aeruginosa PAO1 (MIC=10 uM) and against Gram-positive bacteria B.subtilis VKM B-501 (MIC=0.6 uM) and A.globiformis VKM Ac-1112 (MIC=0.2 uM). Has cytolytic and hemolytic activity. The sequence is that of M-ectatotoxin-Eb2a from Ectatomma brunneum (Ant).